A 3680-amino-acid chain; its full sequence is Dystrophin (3680 aa).

Residues 1-237 (MLWWEEVEDC…ILMYITSLFQ (237 aa)) are actin-binding. 2 consecutive Calponin-homology (CH) domains span residues 15-119 (DVQK…LHWQ) and 134-240 (TNSE…QVLP). Residues 63–72 (PKEKGSTRVH) form an ANK2- and ANK-3 binding region. Residues 310–323 (TSDPTRSPLPSQHL) show a composition bias toward polar residues. The interval 310-332 (TSDPTRSPLPSQHLETPEDKSFG) is disordered. 24 Spectrin repeats span residues 340 to 448 (ANLD…NLHK), 449 to 557 (VLMD…LLQD), 560 to 668 (LKWQ…QISQ), 720 to 829 (EIRK…WLEY), 831 to 935 (NNII…ELQT), 944 to 1047 (RYQE…KLEE), 1050 to 1156 (AKLR…ALKG), 1159 to 1265 (DKTV…TLEE), 1268 to 1369 (ACWH…LLEQ), 1370 to 1465 (SIQS…LFQK), 1470 to 1570 (EQRL…QLEK), 1573 to 1678 (KLSR…LLLE), 1681 to 1780 (KHME…KASI), 1781 to 1876 (PLKE…KALE), 1879 to 1981 (HQWY…TVHE), 1994 to 2103 (EISY…RFDR), 2106 to 2210 (EKWR…RLEE), 2213 to 2320 (NILS…EIEA), 2321 to 2418 (HVKD…LRAK), 2470 to 2572 (FNRA…QLTE), 2575 to 2681 (KDST…ALEE), 2684 to 2797 (RLLQ…HLEA), 2803 to 2925 (KRLH…RKID), and 2930 to 3035 (RLQE…QLHE). The segment at 1418–1915 (DLTSHEISLE…PEPRDERKIK (498 aa)) is interaction with SYNM. The WW domain occupies 3050–3083 (TSVQGPWERAISPNKVPYYINHETQTTCWDHPKM). The segment at 3053 to 3403 (QGPWERAISP…TVLEGDNMET (351 aa)) is interaction with SYNM. A ZZ-type; degenerate zinc finger spans residues 3303-3359 (KHQAKCNICKECPIIGFRYRSLKHFNYDICQSCFFSGRVAKGHKMHYPMVEYCTPTT). Zn(2+)-binding residues include cysteine 3308, cysteine 3311, cysteine 3332, and cysteine 3335. The binds to SNTB1 stretch occupies residues 3461 to 3513 (DDEHLLIQHYWRSLNQESPLSQPRSPAQILISLESEERGELERILADLEGRNR). Phosphoserine occurs at positions 3478, 3485, and 3495. Disordered regions lie at residues 3524–3549 (QQHE…QSPR) and 3595–3680 (PQAE…EDTM). Composition is skewed to polar residues over residues 3602–3621 (NGTT…SSQP) and 3658–3668 (LNHSFPSSRGR). Phosphoserine occurs at positions 3607, 3608, 3612, 3618, 3619, and 3661.

As to quaternary structure, interacts with SYNM. Interacts with the syntrophins SNTG1 and SNTG2. Interacts with KRT19. Component of the dystrophin-associated glycoprotein complex which is composed of three subcomplexes: a cytoplasmic complex comprised of DMD (or UTRN), DTNA and a number of syntrophins, such as SNTB1, SNTB2, SNTG1 and SNTG2, the transmembrane dystroglycan complex, and the sarcoglycan-sarcospan complex. Interacts with DAG1 (betaDAG1) with DMD; the interaction is inhibited by phosphorylation on the PPXY motif of DAG1. Interacts with SYNM; SNTA1 and SNTB1. Interacts with CMYA5. Directly interacts with ANK2 and ANK3; these interactions do not interfere with betaDAG1-binding and are necessary for proper localization in muscle cells. Identified in a dystroglycan complex that contains at least PRX, DRP2, UTRN, DMD and DAG1. Interacts with DTNB. Interacts with PGM5; the interaction is direct. Interacts with NOS1; localizes NOS1 to sarcolemma in muscle cells.

The protein localises to the cell membrane. Its subcellular location is the sarcolemma. It localises to the cytoplasm. The protein resides in the cytoskeleton. It is found in the postsynaptic cell membrane. In terms of biological role, anchors the extracellular matrix to the cytoskeleton via F-actin. Ligand for dystroglycan. Component of the dystrophin-associated glycoprotein complex which accumulates at the neuromuscular junction (NMJ) and at a variety of synapses in the peripheral and central nervous systems and has a structural function in stabilizing the sarcolemma. Also implicated in signaling events and synaptic transmission. The protein is Dystrophin (DMD) of Canis lupus familiaris (Dog).